The chain runs to 99 residues: 10 kDa heat shock protein, mitochondrial (99 aa).

This sequence belongs to the GroES chaperonin family. In terms of assembly, homoheptamer arranged in a ring structure. 2 heptameric Hsp10 rings interact with a Hsp60 tetradecamer in the structure of a back-to-back double heptameric ring to form the symmetrical football complex.

The protein resides in the mitochondrion matrix. Its function is as follows. Co-chaperonin implicated in mitochondrial protein import and macromolecular assembly. Together with Hsp60, facilitates the correct folding of imported proteins. May also prevent misfolding and promote the refolding and proper assembly of unfolded polypeptides generated under stress conditions in the mitochondrial matrix. The functional units of these chaperonins consist of heptameric rings of the large subunit Hsp60, which function as a back-to-back double ring. In a cyclic reaction, Hsp60 ring complexes bind one unfolded substrate protein per ring, followed by the binding of ATP and association with 2 heptameric rings of the co-chaperonin Hsp10. This leads to sequestration of the substrate protein in the inner cavity of Hsp60 where, for a certain period of time, it can fold undisturbed by other cell components. Synchronous hydrolysis of ATP in all Hsp60 subunits results in the dissociation of the chaperonin rings and the release of ADP and the folded substrate protein. The chain is 10 kDa heat shock protein, mitochondrial (hspe1) from Oryzias latipes (Japanese rice fish).